We begin with the raw amino-acid sequence, 397 residues long: MLSLRHIRRFCHFPSSAATGIAYVSTESNQIQGLKPLEEPALVKLKSERDPEKLYNLFKANATNRLVIENRFAFEDTVSRLAGAGRLDFIEDLLEHQKTLPQGRREGFIVRIIMLYGKAGMTKQALDTFFNMDLYGCKRSVKSFNAALQVLSFNPDLHTIWEFLHDAPSKYGIDIDAVSFNIAIKSFCELGILDGAYMAMREMEKSGLTPDVVTYTTLISALYKHERCVIGNGLWNLMVLKGCKPNLTTFNVRIQFLVNRRRAWDANDLLLLMPKLQVEPDSITYNMVIKGFFLARFPDMAERVYTAMHGKGYKPNLKIYQTMIHYLCKAGNFDLAYTMCKDCMRKKWYPNLDTVEMLLKGLVKKGQLDQAKSIMELVHRRVPPFRSKQLLSLKSIL.

The N-terminal 81 residues, 1-81 (MLSLRHIRRF…FAFEDTVSRL (81 aa)), are a transit peptide targeting the mitochondrion. 8 PPR repeats span residues 105–139 (REGF…GCKR), 140–170 (SVKS…APSK), 176–210 (DAVS…GLTP), 211–245 (DVVT…GCKP), 246–280 (NLTT…QVEP), 281–315 (DSIT…GYKP), 316–350 (NLKI…KWYP), and 351–381 (NLDT…VHRR).

The protein belongs to the PPR family. P subfamily.

The protein localises to the mitochondrion. In Arabidopsis thaliana (Mouse-ear cress), this protein is Pentatricopeptide repeat-containing protein At1g80150, mitochondrial.